A 180-amino-acid chain; its full sequence is Large ribosomal subunit protein uL5c (180 aa).

Belongs to the universal ribosomal protein uL5 family. As to quaternary structure, part of the 50S ribosomal subunit; contacts the 5S rRNA.

The protein localises to the plastid. It localises to the chloroplast. Its function is as follows. Binds 5S rRNA, forms part of the central protuberance of the 50S subunit. In Tetradesmus obliquus (Green alga), this protein is Large ribosomal subunit protein uL5c (rpl5).